A 147-amino-acid polypeptide reads, in one-letter code: 3-dehydroquinate dehydratase (147 aa).

Tyr23 acts as the Proton acceptor in catalysis. Substrate-binding residues include Asn75, His81, and Asp88. His101 (proton donor) is an active-site residue. Substrate is bound by residues 102-103 (LS) and Arg112.

This sequence belongs to the type-II 3-dehydroquinase family. As to quaternary structure, homododecamer.

It catalyses the reaction 3-dehydroquinate = 3-dehydroshikimate + H2O. It functions in the pathway metabolic intermediate biosynthesis; chorismate biosynthesis; chorismate from D-erythrose 4-phosphate and phosphoenolpyruvate: step 3/7. Catalyzes a trans-dehydration via an enolate intermediate. The sequence is that of 3-dehydroquinate dehydratase from Nitrosococcus oceani (strain ATCC 19707 / BCRC 17464 / JCM 30415 / NCIMB 11848 / C-107).